A 350-amino-acid chain; its full sequence is Ribonuclease H2 subunit B (350 aa).

Over residues 134-151 (QDYSNSSDTGENQKSNSK) the composition is skewed to polar residues. Residues 134–153 (QDYSNSSDTGENQKSNSKTN) form a disordered region.

It belongs to the RNase H2 subunit B family. Highly divergent. The RNase 2 complex is a heterotrimer composed of the catalytic subunit RNH201 and of the non-catalytic subunits RNH202 and RNH203.

The protein resides in the nucleus. Non catalytic subunit of RNase H2, an endonuclease that specifically degrades the RNA of RNA:DNA hybrids. Participates in DNA replication, possibly by mediating the removal of lagging-strand Okazaki fragment RNA primers during DNA replication. Mediates the excision of single ribonucleotides from DNA:RNA duplexes. The protein is Ribonuclease H2 subunit B (RNH202) of Saccharomyces cerevisiae (strain ATCC 204508 / S288c) (Baker's yeast).